Reading from the N-terminus, the 165-residue chain is Nuclear cap-binding protein subunit 2 (165 aa).

Residues tyrosine 19, tyrosine 42, 111–115 (RADWD), 122–126 (RQYGR), and 132–133 (QV) contribute to the mRNA site. One can recognise an RRM domain in the interval 39–117 (HTLYVGNLSF…RIIRADWDAG (79 aa)). The tract at residues 144-165 (ARGGYGKLAQQHRPTEAIRNTF) is disordered.

The protein belongs to the RRM NCBP2 family. In terms of assembly, component of the nuclear cap-binding complex (CBC), a heterodimer composed of ncbp1/cbp80 and ncbp2/cbp20 that interacts with m7GpppG-capped RNA.

The protein resides in the nucleus. Its subcellular location is the cytoplasm. Its function is as follows. Component of the cap-binding complex (CBC), which binds co-transcriptionally to the 5' cap of pre-mRNAs and is involved in various processes such as pre-mRNA splicing, translation regulation, nonsense-mediated mRNA decay, RNA-mediated gene silencing (RNAi) by microRNAs (miRNAs) and mRNA export. The CBC complex is involved in mRNA export from the nucleus, leading to the recruitment of the mRNA export machinery to the 5' end of mRNA and to mRNA export in a 5' to 3' direction through the nuclear pore. The CBC complex is also involved in mediating U snRNA and intronless mRNAs export from the nucleus. The CBC complex is essential for a pioneer round of mRNA translation, before steady state translation when the CBC complex is replaced by cytoplasmic cap-binding protein eIF4E. The pioneer round of mRNA translation mediated by the CBC complex plays a central role in nonsense-mediated mRNA decay (NMD), NMD only taking place in mRNAs bound to the CBC complex, but not on eIF4E-bound mRNAs. The CBC complex enhances NMD in mRNAs containing at least one exon-junction complex (EJC), promoting the interaction between upf1 and upf2. The CBC complex is also involved in 'failsafe' NMD, which is independent of the EJC complex, while it does not participate in Staufen-mediated mRNA decay (SMD). During cell proliferation, the CBC complex is also involved in microRNAs (miRNAs) biogenesis via its interaction with srrt/ars2, thereby being required for miRNA-mediated RNA interference. The CBC complex also acts as a negative regulator of parn, thereby acting as an inhibitor of mRNA deadenylation. In the CBC complex, ncbp2/cbp20 recognizes and binds capped RNAs (m7GpppG-capped RNA) but requires ncbp1/cbp80 to stabilize the movement of its N-terminal loop and lock the CBC into a high affinity cap-binding state with the cap structure. The conventional cap-binding complex with NCBP2 binds both small nuclear RNA (snRNA) and messenger (mRNA) and is involved in their export from the nucleus. The chain is Nuclear cap-binding protein subunit 2 (ncbp2) from Siniperca chuatsi (Mandarin fish).